Consider the following 743-residue polypeptide: Phosphoribosylformylglycinamidine synthase subunit PurL (743 aa).

The active site involves histidine 50. Residues tyrosine 53 and lysine 92 each contribute to the ATP site. Position 94 (glutamate 94) interacts with Mg(2+). Residues 95 to 98 (SHNH) and arginine 117 contribute to the substrate site. Histidine 96 acts as the Proton acceptor in catalysis. Residue aspartate 118 coordinates Mg(2+). Glutamine 241 contacts substrate. Residue aspartate 269 participates in Mg(2+) binding. 313 to 315 (ESQ) is a binding site for substrate. ATP-binding residues include aspartate 494 and glycine 531. Residue asparagine 532 coordinates Mg(2+). A substrate-binding site is contributed by serine 534.

It belongs to the FGAMS family. Monomer. Part of the FGAM synthase complex composed of 1 PurL, 1 PurQ and 2 PurS subunits.

The protein localises to the cytoplasm. The catalysed reaction is N(2)-formyl-N(1)-(5-phospho-beta-D-ribosyl)glycinamide + L-glutamine + ATP + H2O = 2-formamido-N(1)-(5-O-phospho-beta-D-ribosyl)acetamidine + L-glutamate + ADP + phosphate + H(+). Its pathway is purine metabolism; IMP biosynthesis via de novo pathway; 5-amino-1-(5-phospho-D-ribosyl)imidazole from N(2)-formyl-N(1)-(5-phospho-D-ribosyl)glycinamide: step 1/2. Functionally, part of the phosphoribosylformylglycinamidine synthase complex involved in the purines biosynthetic pathway. Catalyzes the ATP-dependent conversion of formylglycinamide ribonucleotide (FGAR) and glutamine to yield formylglycinamidine ribonucleotide (FGAM) and glutamate. The FGAM synthase complex is composed of three subunits. PurQ produces an ammonia molecule by converting glutamine to glutamate. PurL transfers the ammonia molecule to FGAR to form FGAM in an ATP-dependent manner. PurS interacts with PurQ and PurL and is thought to assist in the transfer of the ammonia molecule from PurQ to PurL. The chain is Phosphoribosylformylglycinamidine synthase subunit PurL from Mesorhizobium japonicum (strain LMG 29417 / CECT 9101 / MAFF 303099) (Mesorhizobium loti (strain MAFF 303099)).